A 550-amino-acid chain; its full sequence is Chaperonin GroEL (550 aa).

ATP contacts are provided by residues 30 to 33 (TLGP), K51, 87 to 91 (DGTTT), G415, and D495.

Belongs to the chaperonin (HSP60) family. As to quaternary structure, forms a cylinder of 14 subunits composed of two heptameric rings stacked back-to-back. Interacts with the co-chaperonin GroES.

Its subcellular location is the cytoplasm. It catalyses the reaction ATP + H2O + a folded polypeptide = ADP + phosphate + an unfolded polypeptide.. In terms of biological role, together with its co-chaperonin GroES, plays an essential role in assisting protein folding. The GroEL-GroES system forms a nano-cage that allows encapsulation of the non-native substrate proteins and provides a physical environment optimized to promote and accelerate protein folding. This chain is Chaperonin GroEL, found in Dechloromonas aromatica (strain RCB).